Consider the following 425-residue polypeptide: Histidine--tRNA ligase (425 aa).

This sequence belongs to the class-II aminoacyl-tRNA synthetase family. In terms of assembly, homodimer.

It localises to the cytoplasm. The catalysed reaction is tRNA(His) + L-histidine + ATP = L-histidyl-tRNA(His) + AMP + diphosphate + H(+). The polypeptide is Histidine--tRNA ligase (Aeromonas hydrophila subsp. hydrophila (strain ATCC 7966 / DSM 30187 / BCRC 13018 / CCUG 14551 / JCM 1027 / KCTC 2358 / NCIMB 9240 / NCTC 8049)).